The primary structure comprises 214 residues: 3-isopropylmalate dehydratase small subunit (214 aa).

This sequence belongs to the LeuD family. LeuD type 1 subfamily. As to quaternary structure, heterodimer of LeuC and LeuD.

The catalysed reaction is (2R,3S)-3-isopropylmalate = (2S)-2-isopropylmalate. It functions in the pathway amino-acid biosynthesis; L-leucine biosynthesis; L-leucine from 3-methyl-2-oxobutanoate: step 2/4. Its function is as follows. Catalyzes the isomerization between 2-isopropylmalate and 3-isopropylmalate, via the formation of 2-isopropylmaleate. This is 3-isopropylmalate dehydratase small subunit from Alcanivorax borkumensis (strain ATCC 700651 / DSM 11573 / NCIMB 13689 / SK2).